A 742-amino-acid chain; its full sequence is 5-methyltetrahydropteroyltriglutamate--homocysteine methyltransferase (742 aa).

Residues 18-21 (REWK) and Lys112 contribute to the 5-methyltetrahydropteroyltri-L-glutamate site. L-homocysteine contacts are provided by residues 420–422 (IGS) and Glu473. L-methionine-binding positions include 420-422 (IGS) and Glu473. Position 550 (Trp550) interacts with 5-methyltetrahydropteroyltri-L-glutamate. L-homocysteine is bound at residue Asp588. Position 588 (Asp588) interacts with L-methionine. Position 594 (Glu594) interacts with 5-methyltetrahydropteroyltri-L-glutamate. Residues His630, Cys632, and Glu654 each contribute to the Zn(2+) site. The active-site Proton donor is His683. Cys715 provides a ligand contact to Zn(2+).

Belongs to the vitamin-B12 independent methionine synthase family. Zn(2+) serves as cofactor.

The enzyme catalyses 5-methyltetrahydropteroyltri-L-glutamate + L-homocysteine = tetrahydropteroyltri-L-glutamate + L-methionine. Its pathway is amino-acid biosynthesis; L-methionine biosynthesis via de novo pathway; L-methionine from L-homocysteine (MetE route): step 1/1. Its function is as follows. Catalyzes the transfer of a methyl group from 5-methyltetrahydrofolate to homocysteine resulting in methionine formation. The polypeptide is 5-methyltetrahydropteroyltriglutamate--homocysteine methyltransferase (Staphylococcus aureus (strain bovine RF122 / ET3-1)).